Here is a 125-residue protein sequence, read N- to C-terminus: Small ribosomal subunit protein uS13 (125 aa).

The protein belongs to the universal ribosomal protein uS13 family. As to quaternary structure, part of the 30S ribosomal subunit. Forms a loose heterodimer with protein S19. Forms two bridges to the 50S subunit in the 70S ribosome.

Its function is as follows. Located at the top of the head of the 30S subunit, it contacts several helices of the 16S rRNA. In the 70S ribosome it contacts the 23S rRNA (bridge B1a) and protein L5 of the 50S subunit (bridge B1b), connecting the 2 subunits; these bridges are implicated in subunit movement. Contacts the tRNAs in the A and P-sites. The polypeptide is Small ribosomal subunit protein uS13 (Gluconobacter oxydans (strain 621H) (Gluconobacter suboxydans)).